A 246-amino-acid polypeptide reads, in one-letter code: Chemokine-binding protein (246 aa).

A compositionally biased stretch (polar residues) spans 108–125 (SESSDGNTVNTRLSSVSP). The disordered stretch occupies residues 108-132 (SESSDGNTVNTRLSSVSPGQGKDSP).

This sequence belongs to the orthopoxvirus OPG001 family.

The protein localises to the secreted. Functionally, inhibits host immune defense by binding to host chemokines. Binds host CC chemokines (beta chemokines) such as RANTES with high affinity, but not CXC or C chemokines (alpha and gamma chemokines). This is Chemokine-binding protein (OPG001) from Monkeypox virus.